The following is a 507-amino-acid chain: Maturase K (507 aa).

This sequence belongs to the intron maturase 2 family. MatK subfamily.

The protein localises to the plastid. It is found in the chloroplast. In terms of biological role, usually encoded in the trnK tRNA gene intron. Probably assists in splicing its own and other chloroplast group II introns. The protein is Maturase K of Cananga odorata (Ylang-ylang tree).